The following is a 419-amino-acid chain: UDP-N-acetylglucosamine 1-carboxyvinyltransferase 2 (419 aa).

22-23 is a phosphoenolpyruvate binding site; sequence KN. Residue Arg-92 coordinates UDP-N-acetyl-alpha-D-glucosamine. Asp-116 (proton donor) is an active-site residue. Residues 121–125, Asp-306, and Leu-328 each bind UDP-N-acetyl-alpha-D-glucosamine; that span reads RPIDQ.

Belongs to the EPSP synthase family. MurA subfamily.

The protein resides in the cytoplasm. The enzyme catalyses phosphoenolpyruvate + UDP-N-acetyl-alpha-D-glucosamine = UDP-N-acetyl-3-O-(1-carboxyvinyl)-alpha-D-glucosamine + phosphate. It functions in the pathway cell wall biogenesis; peptidoglycan biosynthesis. Cell wall formation. Adds enolpyruvyl to UDP-N-acetylglucosamine. This is UDP-N-acetylglucosamine 1-carboxyvinyltransferase 2 from Latilactobacillus sakei subsp. sakei (strain 23K) (Lactobacillus sakei subsp. sakei).